The following is a 385-amino-acid chain: Mannitol-1-phosphate 5-dehydrogenase (385 aa).

3-14 (ALQFGAGNIGRG) lines the NAD(+) pocket.

This sequence belongs to the mannitol dehydrogenase family.

The enzyme catalyses D-mannitol 1-phosphate + NAD(+) = beta-D-fructose 6-phosphate + NADH + H(+). This is Mannitol-1-phosphate 5-dehydrogenase from Buchnera aphidicola subsp. Acyrthosiphon pisum (strain Tuc7).